The primary structure comprises 2486 residues: Nonribosomal peptide synthetase nanA (2486 aa).

Positions 231–637 (FSARQPLSPA…GRRGTQVKLR (407 aa)) are adenylation 1. Positions 786–860 (TDIELKVHAL…DLARSAKETS (75 aa)) constitute a Carrier 1 domain. The residue at position 820 (Ser-820) is an O-(pantetheine 4'-phosphoryl)serine. A condensation 1 region spans residues 902–1314 (EDAYPCTPLQ…LKSVPRVSSQ (413 aa)). The interval 1339–1735 (RAQARKTPLA…GRIGDQMKIR (397 aa)) is adenylation 2. 2 consecutive Carrier domains span residues 1872 to 1948 (PPST…SSAS) and 2404 to 2480 (SSSE…QTQA). 2 positions are modified to O-(pantetheine 4'-phosphoryl)serine: Ser-1909 and Ser-2441. Positions 2404 to 2480 (SSSETIVEPL…KLARLLQTQA (77 aa)) are condensation 2.

The protein belongs to the NRP synthetase family.

Its pathway is secondary metabolite biosynthesis. In terms of biological role, nonribosomal peptide synthetase; part of the gene cluster that mediates the biosynthesis of the benzazepine alkaloid nanangelenin A which contains an unprecedented 3,4-dihydro-1-benzazepine-2,5-dione-N-prenyl-N-acetoxy-anthranilamide scaffold. The first step of nanangelenin biosynthesis is catalyzed by the indoleamine 2,3-dioxygenase nanC which produces N-formyl-kynurenine through the catabolism of tryptophan. The two-module NRPS nanA then utilizes anthranilate (Ant) and L-kynurenine (L-Kyn) to assemble the dipeptide product nanangelenin B. The first adenylation domain of nanA (A1) loads anthranilate onto the T1 domain, while A2 loads kynurenine, generated through spontaneous nonenzymatic deformylation of the nanC-supplied N-formyl-kynurenine. The peptide bond formation between the tethered amino acids is catalyzed by the first condensation domain (C1) between anthranilate's carbonyl carbon and kynurenine's aliphatic primary amine. The second C domain (C2) catalyzes the final cyclization event between the aromatic amine of kynurenine and the tethered carbonyl carbon, yielding nanangelenin B. The terminal T3 domain enhances the catalytic efficiency of C2, suggesting the T2-tethered Ant-L-Kyn is transferred to T3 prior to cyclization by C2. Once released from nanA, nanangelenin B is then prenylated by the prenyltransferase nanD to form nanangelenin C. Nanangelenin C is then N-hydroxylated by the FAD-dependent monooxygenase nanF and further acetylated by the acetyltransferase nanB to yield nanangelenin F. Finally, the N-methyltransferase nanE methylates the amide nitrogen of 1-benzazepine to convert nanangelenin F into nanangelenin A. NanE is also able to methylate most of the intermediates of the pathway such as nanangelenin B and nanangelenin C to produce nanangelenin D and nanangelenin E, respectively. This chain is Nonribosomal peptide synthetase nanA, found in Aspergillus nanangensis.